A 267-amino-acid chain; its full sequence is C-type lectin domain family 12 member A (267 aa).

Over 1 to 43 (MSEEIVYANLKIQDPDKKEETQKSDKCGGKVSADASHSQQKTV) the chain is Cytoplasmic. Residues 5-10 (IVYANL) carry the ITIM motif motif. A Phosphotyrosine modification is found at Y7. The helical; Signal-anchor for type II membrane protein transmembrane segment at 44-64 (LILILLCLLLFIGMGVLGGIF) threads the bilayer. The Extracellular portion of the chain corresponds to 65–267 (YTTLATEMIK…VLNGLPEDSR (203 aa)). 2 N-linked (GlcNAc...) asparagine glycosylation sites follow: N98 and N105. 4 disulfides stabilise this stretch: C118/C130, C133/C144, C161/C246, and C225/C238. The 108-residue stretch at 140–247 (YKDSCYSQLN…CTDENNIICE (108 aa)) folds into the C-type lectin domain. A glycan (N-linked (GlcNAc...) asparagine) is linked at N165.

Homodimer; disulfide-linked. Interacts (when the ITIM motif is phosphorylated) with PTPN6 and PTPN11. Phosphorylated at Tyr-7 by SRC in the ITIM motif following ligand-binding, promoting recruitment of tyrosine-protein phosphatases PTPN6 and PTPN11. Mainly expressed in lymphoid tissues. Preferentially expressed in peripheral blood leukocytes; less frequent in thymus, spleen, heart, brain and lung; and undetectable in other tissues.

It is found in the cell membrane. Its function is as follows. Myeloid inhibitory C-type lectin receptor that acts as a negative regulator of myeloid cell activation. Myeloid cell inhibition is required to limit proinflammatory pathways and protect against excessive inflammation. Specifically recognizes and binds various structures, such as neutrophil extracellular traps (NETs) or monosodium urate crystals. Also acts as a pattern-recognition receptor for pathogen-associated molecules, such as plasmodium hemozoin or mycobacterial micolic acid. Ligand-binding induces phosphorylation of its ITIM motif, followed by recruitment of tyrosine-protein phosphatases PTPN6 and PTPN11, which counteract tyrosine-protein kinase SYK, thereby preventing myeloid cell activation. Acts as a pattern-recognition receptor for NETs in neutrophils: specifically recognizes DNA in NETs, leading to inhibit neutrophil activation and limit further NET formation. This regulation is essential for controlling key neutrophil responses and limit NET-mediated inflammatory conditions. Also recognizes dead cells by acting as a receptor for monosodium urate crystals, leading to down-regulate neutrophil activation. Binding to monosodium urate crystals also promotes the type I interferon response. Acts as an inhibitor of natural killer (NK) cell cytotoxicity. Also acts as an ihibitor of dendritic cell maturation in an IL10-dependent manner. This Mus musculus (Mouse) protein is C-type lectin domain family 12 member A.